The primary structure comprises 312 residues: Porphobilinogen deaminase (312 aa).

Cys-243 is modified (S-(dipyrrolylmethanemethyl)cysteine).

The protein belongs to the HMBS family. In terms of assembly, monomer. Dipyrromethane serves as cofactor.

The catalysed reaction is 4 porphobilinogen + H2O = hydroxymethylbilane + 4 NH4(+). It participates in porphyrin-containing compound metabolism; protoporphyrin-IX biosynthesis; coproporphyrinogen-III from 5-aminolevulinate: step 2/4. In terms of biological role, tetrapolymerization of the monopyrrole PBG into the hydroxymethylbilane pre-uroporphyrinogen in several discrete steps. This Vibrio campbellii (strain ATCC BAA-1116) protein is Porphobilinogen deaminase.